The primary structure comprises 197 residues: Small ribosomal subunit protein uS10c (197 aa).

Residues 1 to 60 (MATSSLSTIVFSPLALSNSSSFPNKPQVSNLSLHSSLSNLRRTLSHSSPSSSSSSNVRVF) constitute a chloroplast transit peptide. Residues 67–91 (ESQETGPESYVEEGSETSALGIGAD) form a disordered region.

The protein belongs to the universal ribosomal protein uS10 family. Part of the 30S ribosomal subunit.

The protein resides in the plastid. Its subcellular location is the chloroplast. In Mesembryanthemum crystallinum (Common ice plant), this protein is Small ribosomal subunit protein uS10c (RPS10).